We begin with the raw amino-acid sequence, 23 residues long: Coenzyme PQQ synthesis protein A (23 aa).

A cross-link (pyrroloquinoline quinone (Glu-Tyr)) is located at residues 15–19; sequence EVTLY.

Belongs to the PqqA family.

The protein operates within cofactor biosynthesis; pyrroloquinoline quinone biosynthesis. In terms of biological role, required for coenzyme pyrroloquinoline quinone (PQQ) biosynthesis. PQQ is probably formed by cross-linking a specific glutamate to a specific tyrosine residue and excising these residues from the peptide. The sequence is that of Coenzyme PQQ synthesis protein A from Pseudomonas aeruginosa (strain UCBPP-PA14).